Reading from the N-terminus, the 433-residue chain is CinA-like protein (433 aa).

The protein belongs to the CinA family.

In Frankia casuarinae (strain DSM 45818 / CECT 9043 / HFP020203 / CcI3), this protein is CinA-like protein.